The chain runs to 37 residues: LFECSFSCEQEKEGDKPCKKKKCKGGWKCKFNMCVKV.

3 disulfides stabilise this stretch: cysteine 4–cysteine 18, cysteine 8–cysteine 29, and cysteine 23–cysteine 34.

In terms of assembly, form 1 and form 2 may dimerize. As to expression, expressed by the venom gland.

It is found in the secreted. Functionally, lethal neurotoxin that blocks neuromuscular transmission. Acts cooperatively to potentiate the activity of huwentoxin-I. The protein is U1-theraphotoxin-Hs1b of Cyriopagopus schmidti (Chinese bird spider).